The following is a 260-amino-acid chain: Uroplakin-1b (260 aa).

Topologically, residues 1 to 12 (MAKDDSSVRCFQ) are cytoplasmic. Residues 13–38 (GLLIFGNVIVGMCGIALTAECIFFVS) traverse the membrane as a helical segment. The Extracellular portion of the chain corresponds to 39-60 (DQHSLYPLLEATDNDDIYGAAW). A helical transmembrane segment spans residues 61 to 81 (IGMFVGICLFCLSVLGIVGIM). Topologically, residues 82–86 (KSNRK) are cytoplasmic. Residues 87-107 (ILLAYFILMFIVYGFEVASCI) traverse the membrane as a helical segment. Residues 108–229 (TAATQRDFFT…ELISGPMNRH (122 aa)) are Extracellular-facing. The chain crosses the membrane as a helical span at residues 230–250 (AWGVAWFGFAILCWTFWVLLG). At 251-260 (TMFYWSRIEY) the chain is on the cytoplasmic side.

It belongs to the tetraspanin (TM4SF) family. As to quaternary structure, heterodimer with uroplakin-3A (UPK3A) or uroplakin-3B (UPK3B).

The protein resides in the membrane. Functionally, component of the asymmetric unit membrane (AUM); a highly specialized biomembrane elaborated by terminally differentiated urothelial cells. This is Uroplakin-1b (UPK1B) from Neovison vison (American mink).